The chain runs to 1463 residues: Alpha-agarase (1463 aa).

The first 27 residues, 1-27 (MITSSKKIVSAMLSTSLWIGVASAAYA), serve as a signal peptide directing secretion. Residues 28-684 (ETTNVEAEGY…PSTLSESIFT (657 aa)) constitute a propeptide that is removed on maturation. Disordered regions lie at residues 166 to 191 (VTPE…PGTP) and 512 to 549 (TDDI…PQPG). Residues 518–536 (CANTPSGETANATGCSSSQ) are compositionally biased toward polar residues. The PA14 domain occupies 534–677 (SSQEGGGTDP…GGTNFVHPST (144 aa)). Residues 701–832 (IIVELESFVF…QWSGDRVRFT (132 aa)) form the CBM6 domain.

The protein belongs to the glycosyl hydrolase 96 family. In terms of assembly, monomer. Ca(2+) serves as cofactor.

It catalyses the reaction Endohydrolysis of 1,3-alpha-L-galactosidic linkages in agarose, yielding agarotetraose as the major product.. In terms of biological role, alpha-agarase. Hydrolyzes agarose, agarohexaose, neoagarohexaose and porphyran. Hydrolysis of porphyran by this enzyme improves its antioxidant activity. Does not hydrolyze kappa-carrageenan, iota-carrageenen or lambda-carrageenan. This Thalassotalea agarivorans (Thalassomonas agarivorans) protein is Alpha-agarase.